The sequence spans 274 residues: Large ribosomal subunit protein uL2 (274 aa).

The disordered stretch occupies residues 223-274 (GIAMNPVDHPHGGGEGRSKGNHPVTPWGMPTKGYKTRKKKQSDKYIISRRKK). Over residues 230–240 (DHPHGGGEGRS) the composition is skewed to basic and acidic residues. Positions 256–274 (YKTRKKKQSDKYIISRRKK) are enriched in basic residues.

This sequence belongs to the universal ribosomal protein uL2 family. As to quaternary structure, part of the 50S ribosomal subunit. Forms a bridge to the 30S subunit in the 70S ribosome.

Its function is as follows. One of the primary rRNA binding proteins. Required for association of the 30S and 50S subunits to form the 70S ribosome, for tRNA binding and peptide bond formation. It has been suggested to have peptidyltransferase activity; this is somewhat controversial. Makes several contacts with the 16S rRNA in the 70S ribosome. This chain is Large ribosomal subunit protein uL2, found in Nautilia profundicola (strain ATCC BAA-1463 / DSM 18972 / AmH).